The primary structure comprises 303 residues: MTHWAFSPIQPGAARNMAAWQIAGKKDGPYQIDVSWPLTWSESGDASGKSANAVYLVDGNALFLTATETLRRRESHRPSETGTVVIAIGYPITDSVFSPRRSYDLTPPCDHYIPPEGPDGSPKPEAHGGADEFLTFIAEIVRPFVELKVFPRVSFGRTALFGHSYGGLFALHALFTKPSSFDVYLAASPSIWWNNRSILTEARRFISGAALFSSAHPVLRLSFGSREQYPVRQRVESDEMFKRRQRAAEQRRMNDNCEELYSELLASGRLCKLEVKEYLDEDHGSVIGPALSGGIMFLSNLSA.

The protein belongs to the esterase D family. Homodimer.

The enzyme catalyses enterobactin + 3 H2O = 3 N-(2,3-dihydroxybenzoyl)-L-serine + 2 H(+). Functionally, displays specific enterobactin (ENB) esterase activity required for intracellular release of iron. Enterobactin is a xenosiderophore that is selectively produced by Gram-negative Enterobacteriaceae. The affinity for enterobactin is quite high, potentially due to the low natural abundance of this xenosiderophore in fungal habitats. Does not hydrolyze triacetylfusarinine C (TAFC). This chain is Siderophore enterobactin esterase, found in Emericella nidulans (strain FGSC A4 / ATCC 38163 / CBS 112.46 / NRRL 194 / M139) (Aspergillus nidulans).